We begin with the raw amino-acid sequence, 433 residues long: Hps1-dma1 cluster O-methyltransferase (433 aa).

The interval Asn36–Pro55 is disordered. Asp285 serves as a coordination point for S-adenosyl-L-methionine. His331 (proton acceptor) is an active-site residue.

It belongs to the class I-like SAM-binding methyltransferase superfamily. Cation-independent O-methyltransferase family. COMT subfamily.

The protein operates within secondary metabolite biosynthesis. O-methyltransferase; part of the hps1-dma1 gene cluster that probably mediates the biosynthesis a derivative of cyclopiazonic acid (CPA). The hybrid polyketide synthase-nonribosomal peptide synthetase (PKS-NRPS) nps1 might incorporates acetyl-CoA, malonyl-CoA, and tryptophan (Trp) and utilizes a C-terminal redox-incompetent reductase domain to make and release the tryptophan tetramic acid, cyclo-acetoacetyl-L-tryptophan (c-AATrp), as the first intermediate in the pathway. In addition, the cluster also includes the tryptophan dimethylallyltransferase dma1, the FAD-dependent oxidoreductase toxD, the cytochrome P450 monooxygenase cyp3.1 and the methyltransferase DOTSEDRAFT_139328; the latter 2 being not present in all CPA-producing fungi but involved in additional modifications that occur in biosynthesis the of a range of CPA and CPA-like products. Further studies are required to clarify whether the CPA-like hps1-dma1 cluster is functional or a non-functional relic reflecting evolution of D.septosporum. The protein is Hps1-dma1 cluster O-methyltransferase of Dothistroma septosporum (strain NZE10 / CBS 128990) (Red band needle blight fungus).